Reading from the N-terminus, the 367-residue chain is Phospho-N-acetylmuramoyl-pentapeptide-transferase (367 aa).

10 helical membrane-spanning segments follow: residues 27-47, 73-93, 97-117, 132-152, 167-187, 200-220, 237-257, 264-284, 289-309, and 344-364; these read VLAA…VIRW, TMGG…WGDL, YVWT…YDDW, WKFF…AFSA, TMAY…VIVG, GLAI…AYVT, AGEL…FLWF, VFMG…VAVI, IVLL…MLQV, and QVVV…LSTL.

Belongs to the glycosyltransferase 4 family. MraY subfamily. The cofactor is Mg(2+).

Its subcellular location is the cell inner membrane. It catalyses the reaction UDP-N-acetyl-alpha-D-muramoyl-L-alanyl-gamma-D-glutamyl-meso-2,6-diaminopimeloyl-D-alanyl-D-alanine + di-trans,octa-cis-undecaprenyl phosphate = di-trans,octa-cis-undecaprenyl diphospho-N-acetyl-alpha-D-muramoyl-L-alanyl-D-glutamyl-meso-2,6-diaminopimeloyl-D-alanyl-D-alanine + UMP. It participates in cell wall biogenesis; peptidoglycan biosynthesis. Its function is as follows. Catalyzes the initial step of the lipid cycle reactions in the biosynthesis of the cell wall peptidoglycan: transfers peptidoglycan precursor phospho-MurNAc-pentapeptide from UDP-MurNAc-pentapeptide onto the lipid carrier undecaprenyl phosphate, yielding undecaprenyl-pyrophosphoryl-MurNAc-pentapeptide, known as lipid I. The chain is Phospho-N-acetylmuramoyl-pentapeptide-transferase from Dechloromonas aromatica (strain RCB).